Reading from the N-terminus, the 31-residue chain is Cytochrome b6-f complex subunit 6 (31 aa).

Residues 3 to 23 traverse the membrane as a helical segment; the sequence is LIIGYIILLACAFGLAAGLYF.

This sequence belongs to the PetL family. As to quaternary structure, the 4 large subunits of the cytochrome b6-f complex are cytochrome b6, subunit IV (17 kDa polypeptide, PetD), cytochrome f and the Rieske protein, while the 4 small subunits are PetG, PetL, PetM and PetN. The complex functions as a dimer.

The protein localises to the plastid. It is found in the chloroplast thylakoid membrane. Functionally, component of the cytochrome b6-f complex, which mediates electron transfer between photosystem II (PSII) and photosystem I (PSI), cyclic electron flow around PSI, and state transitions. PetL is important for photoautotrophic growth as well as for electron transfer efficiency and stability of the cytochrome b6-f complex. The protein is Cytochrome b6-f complex subunit 6 of Guillardia theta (Cryptophyte).